The chain runs to 365 residues: Coxsackievirus and adenovirus receptor (365 aa).

The signal sequence occupies residues 1-19 (MALLLCFVLLCGVVDFARS). 2 consecutive Ig-like C2-type domains span residues 20-134 (LSIT…KKIH) and 141-228 (PSGA…LRLN). Topologically, residues 20–237 (LSITTPEEMI…NVVPPSNKAG (218 aa)) are extracellular. Cystine bridges form between C41–C120 and C162–C212. 2 N-linked (GlcNAc...) asparagine glycosylation sites follow: N106 and N201. Residues 238–258 (LIAGAIIGTLLALALIGLIIF) form a helical membrane-spanning segment. 2 S-palmitoyl cysteine lipidation sites follow: C259 and C260. At 259–365 (CCRKKRREEK…PAQSKDGSIV (107 aa)) the chain is on the cytoplasmic side. Residues 269–282 (YEKEVHHDIREDVP) show a composition bias toward basic and acidic residues. Residues 269 to 343 (YEKEVHHDIR…TLPPAKVAAP (75 aa)) are disordered. Residues 286–322 (SRTSTARSYIGSNHSSLGSMSPSNMEGYSKTQYNQVP) show a composition bias toward polar residues. A phosphoserine mark is found at S297, S304, S306, S323, S332, and S363. Residues 360–365 (KDGSIV) carry the PDZ-binding motif.

Monomer. May form homodimer. Interacts with LNX, MAGI1, DLG4, PRKCABP, TJP1 and CTNNB1. Interacts with MPDZ; recruits MPDZ to intercellular contact sites. Interacts with JAML (homodimeric form). Secreted isoform 3, isoform 4 and isoform 5 can interact with the extracellular domain of the receptor. As to quaternary structure, (Microbial infection) Interacts with adenovirus subgroups A, C, D, E and F fiber proteins as well as coxsackievirus B1, B2, B3, B4, B5 and B6 capsid proteins. N-glycosylated. Post-translationally, palmitoylated on Cys-259 and/or Cys-260; required for proper localization to the plasma membrane. Expressed in pancreas, brain, heart, small intestine, testis, prostate and at a lower level in liver and lung. Isoform 5 is ubiquitously expressed. Isoform 3 is expressed in heart, lung and pancreas. In skeletal muscle, isoform 1 is found at the neuromuscular junction and isoform 2 is found in blood vessels. In cardiac muscle, isoform 1 and isoform 2 are found at intercalated disks. In heart expressed in subendothelial layers of the vessel wall but not in the luminal endothelial surface. Expression is elevated in hearts with dilated cardiomyopathy.

It localises to the cell membrane. It is found in the basolateral cell membrane. Its subcellular location is the cell junction. The protein localises to the tight junction. The protein resides in the adherens junction. It localises to the secreted. Functionally, component of the epithelial apical junction complex that may function as a homophilic cell adhesion molecule and is essential for tight junction integrity. Also involved in transepithelial migration of leukocytes through adhesive interactions with JAML a transmembrane protein of the plasma membrane of leukocytes. The interaction between both receptors also mediates the activation of gamma-delta T-cells, a subpopulation of T-cells residing in epithelia and involved in tissue homeostasis and repair. Upon epithelial CXADR-binding, JAML induces downstream cell signaling events in gamma-delta T-cells through PI3-kinase and MAP kinases. It results in proliferation and production of cytokines and growth factors by T-cells that in turn stimulate epithelial tissues repair. Its function is as follows. (Microbial infection) Acts as a receptor for adenovirus type C. In terms of biological role, (Microbial infection) Acts as a receptor for Coxsackievirus B1 to B6. The protein is Coxsackievirus and adenovirus receptor (CXADR) of Homo sapiens (Human).